The chain runs to 450 residues: 3-phosphoshikimate 1-carboxyvinyltransferase (450 aa).

3 residues coordinate 3-phosphoshikimate: K28, S29, and R33. K28 contacts phosphoenolpyruvate. The phosphoenolpyruvate site is built by G100 and R128. 3-phosphoshikimate contacts are provided by S173, Q175, D326, and K353. Phosphoenolpyruvate is bound at residue Q175. D326 functions as the Proton acceptor in the catalytic mechanism. Phosphoenolpyruvate contacts are provided by R357 and R402.

The protein belongs to the EPSP synthase family. In terms of assembly, monomer.

The protein localises to the cytoplasm. The enzyme catalyses 3-phosphoshikimate + phosphoenolpyruvate = 5-O-(1-carboxyvinyl)-3-phosphoshikimate + phosphate. It participates in metabolic intermediate biosynthesis; chorismate biosynthesis; chorismate from D-erythrose 4-phosphate and phosphoenolpyruvate: step 6/7. In terms of biological role, catalyzes the transfer of the enolpyruvyl moiety of phosphoenolpyruvate (PEP) to the 5-hydroxyl of shikimate-3-phosphate (S3P) to produce enolpyruvyl shikimate-3-phosphate and inorganic phosphate. The polypeptide is 3-phosphoshikimate 1-carboxyvinyltransferase (Brucella melitensis biotype 2 (strain ATCC 23457)).